The following is a 70-amino-acid chain: Small ribosomal subunit protein bS21 (70 aa).

It belongs to the bacterial ribosomal protein bS21 family.

This chain is Small ribosomal subunit protein bS21, found in Azoarcus sp. (strain BH72).